Reading from the N-terminus, the 275-residue chain is 2,3,4,5-tetrahydropyridine-2,6-dicarboxylate N-succinyltransferase (275 aa).

Substrate is bound by residues Arg108 and Asp145.

The protein belongs to the transferase hexapeptide repeat family. In terms of assembly, homotrimer.

Its subcellular location is the cytoplasm. The catalysed reaction is (S)-2,3,4,5-tetrahydrodipicolinate + succinyl-CoA + H2O = (S)-2-succinylamino-6-oxoheptanedioate + CoA. It functions in the pathway amino-acid biosynthesis; L-lysine biosynthesis via DAP pathway; LL-2,6-diaminopimelate from (S)-tetrahydrodipicolinate (succinylase route): step 1/3. This Ruegeria pomeroyi (strain ATCC 700808 / DSM 15171 / DSS-3) (Silicibacter pomeroyi) protein is 2,3,4,5-tetrahydropyridine-2,6-dicarboxylate N-succinyltransferase.